Reading from the N-terminus, the 568-residue chain is Putative ABC transporter ATP-binding protein EF_2153 (568 aa).

2 ABC transporter domains span residues I6 to E247 and L301 to K535. ATP contacts are provided by residues G40–S47 and G335–S342.

The protein belongs to the ABC transporter superfamily.

Its subcellular location is the cell membrane. Functionally, probably part of an ABC transporter complex. Responsible for energy coupling to the transport system. The chain is Putative ABC transporter ATP-binding protein EF_2153 from Enterococcus faecalis (strain ATCC 700802 / V583).